Reading from the N-terminus, the 254-residue chain is L-rhamnose 1-dehydrogenase (NADP(+)) (254 aa).

Positions 13, 15, 16, 18, 64, and 91 each coordinate NADP(+). Serine 144 acts as the Proton donor in catalysis. Residues serine 144, serine 146, glutamine 154, and tyrosine 157 each contribute to the beta-L-rhamnose site. The NADP(+) site is built by tyrosine 157 and lysine 161. Tyrosine 157 (proton acceptor) is an active-site residue. The Lowers pKa of active site Tyr role is filled by lysine 161. Residue threonine 189 coordinates beta-L-rhamnose. Isoleucine 190 contributes to the NADP(+) binding site. A beta-L-rhamnose-binding site is contributed by asparagine 195.

It belongs to the short-chain dehydrogenases/reductases (SDR) family.

It carries out the reaction L-rhamnofuranose + NADP(+) = L-rhamnono-1,4-lactone + NADPH + H(+). It participates in carbohydrate degradation; L-rhamnose degradation. In terms of biological role, involved in the non-phosphorylated metabolic pathway of L-rhamnose catabolism. Catalyzes the oxidation of L-rhamnose to yield L-rhamnono-1,4-lactone. It can also oxidize L-lyxose and L-mannose, and uses only NADP. The chain is L-rhamnose 1-dehydrogenase (NADP(+)) from Thermoplasma acidophilum (strain ATCC 25905 / DSM 1728 / JCM 9062 / NBRC 15155 / AMRC-C165).